The primary structure comprises 215 residues: UPF0502 protein YceH (215 aa).

Lys80 is modified (N6-acetyllysine).

It belongs to the UPF0502 family.

The polypeptide is UPF0502 protein YceH (Shigella sonnei (strain Ss046)).